The sequence spans 544 residues: Putative glycerol-3-phosphate transporter 4 (544 aa).

The next 6 helical transmembrane spans lie at 28 to 47, 121 to 141, 156 to 176, 181 to 201, 218 to 238, and 240 to 260; these read TFRY…YHAS, VAFL…GDSL, FFVG…WFFL, AAGL…GNWF, SVGN…GWGW, and FIAP…FLAA. A disordered region spans residues 281–313; the sequence is KRDVEEEEEEVEEDLGTDVEGDGEGSSGSGSGY. The segment covering 285–303 has biased composition (acidic residues); the sequence is EEEEEEVEEDLGTDVEGDG. Helical transmembrane passes span 319-339, 342-362, 371-391, 402-422, 428-448, 471-491, and 494-514; these read VGLL…CLFF, LVAY…TIGG, GNLS…CGYI, AAAF…YGGV, ILLM…ITTA, AIID…TGFL, and LGWQ…GLLL.

The protein belongs to the major facilitator superfamily. Organophosphate:Pi antiporter (OPA) (TC 2.A.1.4) family.

It localises to the membrane. In Arabidopsis thaliana (Mouse-ear cress), this protein is Putative glycerol-3-phosphate transporter 4.